A 228-amino-acid chain; its full sequence is Upstream activation factor subunit UAF30 (228 aa).

The DEK-C domain maps to 1–56; the sequence is MAELNDYSTMIDILLSDMDLETVTTKKVRMALKEVYAIDVESQGKAINKLIRKHLD. A compositionally biased stretch (basic and acidic residues) spans 89 to 111; the sequence is SKRSSGEEKNDSETKGTHVEKKK. Positions 89-118 are disordered; it reads SKRSSGEEKNDSETKGTHVEKKKGTVSKSP. The SWIB/MDM2 domain maps to 119 to 195; that stretch reads ISTRKVTLSK…HKILASHMTE (77 aa). The disordered stretch occupies residues 209–228; that stretch reads VRRKEKPIVSDSEQSDTKGI. Phosphoserine is present on residues Ser218, Ser220, and Ser223.

In terms of assembly, component of the UAF (upstream activation factor) complex which consists of UAF30, RRN5, RRN9, RRN10, and histones H3 and H4.

It localises to the nucleus. The protein resides in the nucleolus. Nonessential component of the UAF (upstream activation factor) complex which interacts with the upstream element of the RNA polymerase I promoter and forms a stable preinitiation complex. Together with SPT15/TBP UAF seems to stimulate basal transcription to a fully activated level. UAF30 seems to play a role in silencing transcription by RNA polymerase II. In Saccharomyces cerevisiae (strain ATCC 204508 / S288c) (Baker's yeast), this protein is Upstream activation factor subunit UAF30 (UAF30).